We begin with the raw amino-acid sequence, 160 residues long: Ribonuclease H (160 aa).

Residues 1–157 (MNIEIYTDGA…CDRLAVEACQ (157 aa)) form the RNase H type-1 domain. Mg(2+) is bound by residues Asp-8, Glu-49, Asp-85, and Asp-149.

This sequence belongs to the RNase H family. In terms of assembly, monomer. It depends on Mg(2+) as a cofactor.

Its subcellular location is the cytoplasm. It carries out the reaction Endonucleolytic cleavage to 5'-phosphomonoester.. Its function is as follows. Endonuclease that specifically degrades the RNA of RNA-DNA hybrids. The protein is Ribonuclease H of Treponema denticola (strain ATCC 35405 / DSM 14222 / CIP 103919 / JCM 8153 / KCTC 15104).